A 648-amino-acid polypeptide reads, in one-letter code: Zinc finger CW-type PWWP domain protein 1 (648 aa).

2 disordered regions span residues 1–103 (MMTT…TNAE) and 137–237 (VVST…QDHS). Basic and acidic residues-rich tracts occupy residues 61 to 79 (KKKE…EQEK) and 88 to 97 (QAEKKEKEKS). Residues 74–109 (SREQEKKRKAQINKQAEKKEKEKSSLTNAEFEEIVQ) are a coiled coil. A compositionally biased stretch (basic residues) spans 194–208 (SKKKSNRLTLSKRKK). The span at 209-237 (EAHEKVEKTQGGHEHRQEDRLKKTVQDHS) shows a compositional bias: basic and acidic residues. The CW-type zinc-finger motif lies at 250 to 304 (FGQCLVWVQCSFPNCGKWRRLCGNIDPSVLPDNWSCDQNTDVQYNRCDIPEETWT). Residues Cys-259, Cys-264, Cys-285, and Cys-296 each coordinate Zn(2+). A PWWP domain is found at 317–383 (PGSIIWAKQY…VNMLKNFQEL (67 aa)). Positions 436–648 (GERKDLQLSG…EDFPVALFGK (213 aa)) are disordered. Over residues 453–471 (LEKKEKEEELEKEEGEKTD) the composition is skewed to basic and acidic residues. The span at 505 to 516 (TLQRKIMKRSLG) shows a compositional bias: basic residues. Positions 585–595 (AKEEPRHREPL) are enriched in basic and acidic residues. Acidic residues predominate over residues 604-618 (LEDEASSDLDLEQLM). Ser-636 carries the phosphoserine modification.

Testis.

It is found in the nucleus. The protein resides in the chromosome. Its function is as follows. Dual histone methylation reader specific for PRDM9-catalyzed histone marks (H3K4me3 and H3K36me3). Facilitates the repair of PRDM9-induced meiotic double-strand breaks (DSBs). Essential for male fertility and spermatogenesis. Required for meiosis prophase I progression in male but not in female germ cells. The sequence is that of Zinc finger CW-type PWWP domain protein 1 (ZCWPW1) from Homo sapiens (Human).